The sequence spans 382 residues: Glutamate 5-kinase (382 aa).

Lysine 15 serves as a coordination point for ATP. Substrate-binding residues include serine 62, aspartate 149, and asparagine 161. 181–182 (TD) is an ATP binding site. Positions 288–366 (RGSVSVDAGA…VEIERLLGYS (79 aa)) constitute a PUA domain.

Belongs to the glutamate 5-kinase family.

It is found in the cytoplasm. It carries out the reaction L-glutamate + ATP = L-glutamyl 5-phosphate + ADP. It participates in amino-acid biosynthesis; L-proline biosynthesis; L-glutamate 5-semialdehyde from L-glutamate: step 1/2. Functionally, catalyzes the transfer of a phosphate group to glutamate to form L-glutamate 5-phosphate. This Delftia acidovorans (strain DSM 14801 / SPH-1) protein is Glutamate 5-kinase.